The following is a 59-amino-acid chain: ATP synthase subunit J, mitochondrial (59 aa).

A helical transmembrane segment spans residues 9–25 (ILKVYWPFFVAGAAVYY).

The protein belongs to the ATPase j subunit family. As to quaternary structure, F-type ATPases have 2 components, CF(1) - the catalytic core - and CF(0) - the membrane proton channel. In yeast, the dimeric form of ATP synthase consists of 17 polypeptides: alpha, beta, gamma, delta, epsilon, 4 (B), 5 (OSCP), 6 (A), 8, 9 (C), d, E (Tim11), f, g, h, i/j and k.

It localises to the mitochondrion membrane. In terms of biological role, mitochondrial membrane ATP synthase (F(1)F(0) ATP synthase or Complex V) produces ATP from ADP in the presence of a proton gradient across the membrane which is generated by electron transport complexes of the respiratory chain. F-type ATPases consist of two structural domains, F(1) - containing the extramembraneous catalytic core and F(0) - containing the membrane proton channel, linked together by a central stalk and a peripheral stalk. During catalysis, ATP synthesis in the catalytic domain of F(1) is coupled via a rotary mechanism of the central stalk subunits to proton translocation. Part of the complex F(0) domain. Minor subunit located with subunit a in the membrane. The polypeptide is ATP synthase subunit J, mitochondrial (ATP18) (Saccharomyces cerevisiae (strain ATCC 204508 / S288c) (Baker's yeast)).